Reading from the N-terminus, the 539-residue chain is CTP synthase (539 aa).

The amidoligase domain stretch occupies residues 1–268; it reads MSFKSIFLTG…SDFLLNKLGF (268 aa). Ser-14 is a binding site for CTP. UTP is bound at residue Ser-14. 15–20 provides a ligand contact to ATP; the sequence is SLGKGL. An L-glutamine-binding site is contributed by Tyr-55. Asp-72 contributes to the ATP binding site. Asp-72 and Glu-142 together coordinate Mg(2+). CTP contacts are provided by residues 149-151, 188-193, and Lys-224; these read DIE and KTKPTQ. UTP is bound by residues 188 to 193 and Lys-224; that span reads KTKPTQ. Leu-242 is an ATP binding site. The Glutamine amidotransferase type-1 domain maps to 294–532; the sequence is RIGLVGKYLE…IRAAKAYSLE (239 aa). An L-glutamine-binding site is contributed by Gly-353. Cys-380 (nucleophile; for glutamine hydrolysis) is an active-site residue. Residues 381 to 384, Glu-404, and Arg-460 each bind L-glutamine; that span reads LGMQ. Active-site residues include His-505 and Glu-507.

Belongs to the CTP synthase family. As to quaternary structure, homotetramer.

It carries out the reaction UTP + L-glutamine + ATP + H2O = CTP + L-glutamate + ADP + phosphate + 2 H(+). It catalyses the reaction L-glutamine + H2O = L-glutamate + NH4(+). The enzyme catalyses UTP + NH4(+) + ATP = CTP + ADP + phosphate + 2 H(+). It participates in pyrimidine metabolism; CTP biosynthesis via de novo pathway; CTP from UDP: step 2/2. Its activity is regulated as follows. Allosterically activated by GTP, when glutamine is the substrate; GTP has no effect on the reaction when ammonia is the substrate. The allosteric effector GTP functions by stabilizing the protein conformation that binds the tetrahedral intermediate(s) formed during glutamine hydrolysis. Inhibited by the product CTP, via allosteric rather than competitive inhibition. In terms of biological role, catalyzes the ATP-dependent amination of UTP to CTP with either L-glutamine or ammonia as the source of nitrogen. May be involved in lipopolysaccharide biosynthesis, potentially channelling CTP directly to CMP-KDO synthetase. Regulates intracellular CTP levels through interactions with the four ribonucleotide triphosphates. This chain is CTP synthase, found in Chlamydia trachomatis serovar D (strain ATCC VR-885 / DSM 19411 / UW-3/Cx).